A 666-amino-acid chain; its full sequence is MSDSHLTAFDKASKAGFIIALGIVYGDIGTSPLYTMQSLVENQGGVNQVSESFILGSISLIIWTLTLITTIKYVLIALKADNHHEGGIFSLFTLVRKMSPWLIIPAMIGGATLLSDGALTPAVTVTSAIEGLKAVPGLSHIYQNQTNVIITTLVILIVLFGIQRFGTGFIGKIFGPVMFIWFSFLGVSGFFNTLGHLEIFKAINPYYALHLLFSPENHRGIFILGSIFLATTGAEALYSDLGHVGRGNIYVSWPFVKMCIVLSYCGQAAWILANKHSGIELNPFFASVPSQLTVYVVILATLAAIIASQALISGSFTLVSEAMRLKIFPLFRVTYPGANLGQLYIPVINWILFAVTSCTVLYFRTSAHMEAAYGLAITITMLMTTILLNYYLIKEGVKPFLAHLVMTFFALVEFIFFWASAVKFMHGGYVVVILALAIVFVMFIWHAGTRIVFKYVKSLNLNDYKEQIKQLRDDVCFDLYQTNVVYLSNRMQDYMIDRSILYSILDKRPKRARVYWFVNVQVTDEPYTAKYKVDMMGTDYMVRVNLYLGFRMPQTVPRYLRTIVQDLMESGRLPKQEQEYTITPGRDVGDFRFVLIEERVSNARQLSNFERFIMQTKASIKHVTASPMRWFGLQYSEVTLEVVPLILSDVLKLPIKELVPVEDSEA.

The next 12 membrane-spanning stretches (helical) occupy residues 16–36 (GFII…LYTM), 58–78 (ISLI…LIAL), 100–120 (PWLI…GALT), 141–161 (IYQN…VLFG), 165–185 (FGTG…FSFL), 221–241 (IFIL…YSDL), 253–273 (WPFV…WILA), 292–312 (LTVY…QALI), 343–363 (LYIP…VLYF), 373–393 (YGLA…YYLI), 399–419 (PFLA…FFWA), and 424–444 (FMHG…VMFI).

Belongs to the HAK/KUP transporter (TC 2.A.72) family.

The protein localises to the cell membrane. The enzyme catalyses K(+)(in) + H(+)(in) = K(+)(out) + H(+)(out). Its function is as follows. Transport of potassium into the cell. Likely operates as a K(+):H(+) symporter. This is Probable potassium transport system protein Kup from Streptococcus pyogenes serotype M5 (strain Manfredo).